Here is a 464-residue protein sequence, read N- to C-terminus: tRNA-2-methylthio-N(6)-dimethylallyladenosine synthase (464 aa).

The tract at residues 1-24 (MSDLVPLSRKPAPAAGGPAPSPAA) is disordered. Residues 8–18 (SRKPAPAAGGP) are compositionally biased toward low complexity. One can recognise an MTTase N-terminal domain in the interval 27–142 (RKVYVHTFGC…LPEMVERARD (116 aa)). [4Fe-4S] cluster is bound by residues cysteine 36, cysteine 72, cysteine 105, cysteine 180, cysteine 184, and cysteine 187. The region spanning 166–398 (ARGRVTAFVT…LAAQRRIAGE (233 aa)) is the Radical SAM core domain. Residues 401–464 (AGELGKVVEV…GGSSLSGTLA (64 aa)) enclose the TRAM domain.

It belongs to the methylthiotransferase family. MiaB subfamily. As to quaternary structure, monomer. [4Fe-4S] cluster serves as cofactor.

It localises to the cytoplasm. It carries out the reaction N(6)-dimethylallyladenosine(37) in tRNA + (sulfur carrier)-SH + AH2 + 2 S-adenosyl-L-methionine = 2-methylsulfanyl-N(6)-dimethylallyladenosine(37) in tRNA + (sulfur carrier)-H + 5'-deoxyadenosine + L-methionine + A + S-adenosyl-L-homocysteine + 2 H(+). In terms of biological role, catalyzes the methylthiolation of N6-(dimethylallyl)adenosine (i(6)A), leading to the formation of 2-methylthio-N6-(dimethylallyl)adenosine (ms(2)i(6)A) at position 37 in tRNAs that read codons beginning with uridine. The polypeptide is tRNA-2-methylthio-N(6)-dimethylallyladenosine synthase (Anaeromyxobacter sp. (strain K)).